The following is a 1008-amino-acid chain: ATP-dependent DNA/RNA helicase DHX36 (1008 aa).

Residues 1–51 are required for recruitment to cytoplasmic stress granules; that stretch reads MSYDYHQNWGRDGGPRSSGGGYGGGPAGGHGGNRGSGGGGGGGGGGRGGRG. The disordered stretch occupies residues 1–58; the sequence is MSYDYHQNWGRDGGPRSSGGGYGGGPAGGHGGNRGSGGGGGGGGGGRGGRGRHPGHLK. Positions 1–104 are required for the pre-miR-134 transport; that stretch reads MSYDYHQNWG…IVQLLNSVQA (104 aa). Positions 1–200 are necessary for nuclear and nucleolar caps localizations; the sequence is MSYDYHQNWG…KKNDLRYIEM (200 aa). Positions 16-48 are enriched in gly residues; that stretch reads RSSGGGYGGGPAGGHGGNRGSGGGGGGGGGGRG. The interval 53-75 is DSM (DHX36-specific motif); it reads HPGHLKGREIGMWYAKKQGQKNK. The tract at residues 53-105 is required for G4-DNA- and G4-RNA-binding; it reads HPGHLKGREIGMWYAKKQGQKNKEAERQERAVVHMDERREEQIVQLLNSVQAK. Residues 72-157 adopt a coiled-coil conformation; the sequence is QKNKEAERQE…INQEKKMFRI (86 aa). RecA-like domain stretches follow at residues 106 to 386 and 387 to 628; these read NDKE…MIHI and PGFT…DYQL. Serine 161 is modified (phosphoserine). Residues 217 to 387 enclose the Helicase ATP-binding domain; the sequence is VNLIDNHQVT…FGNCPMIHIP (171 aa). Position 233–238 (233–238) interacts with ATP; the sequence is GCGKTT. Residues 265 to 317 form a necessary for interaction with single-stranded DNA at the 3'-end of the G4-DNA structure region; it reads RRISAISVAERVAAERAESCGSGNSTGYQIRLQSRLPRKQGSILYCTTGIILQ. A DEAH box motif is present at residues 334–337; that stretch reads DEIH. Mg(2+) contacts are provided by glutamate 335 and histidine 337. A Helicase C-terminal domain is found at 477–647; that stretch reads ALIRYIVLEE…ELCLQIKILR (171 aa). The segment at 498-557 is necessary for interaction with single-stranded DNA at the 3'-end of the G4-DNA structure; it reads WDNISTLHDLLMSQVMFKSDKFLIIPLHSLMPTVNQTQVFKRTPPGVRKIVIATNIAETS. The Nuclear localization signal motif lies at 517 to 528; that stretch reads DKFLIIPLHSLM. ATP contacts are provided by residues serine 557 and 602 to 605; that span reads RAGR. The WH domain stretch occupies residues 629 to 698; that stretch reads PEILRTPLEE…LGVHLARLPV (70 aa). Necessary for interaction with single-stranded DNA at the 3'-end of the G4-DNA structure stretches follow at residues 638-697, 849-860, and 870-900; these read ELCL…ARLP, NLGKKRKMVKVY, and HPKS…IYLY. Residues 841–905 are OB-fold-like subdomains; the sequence is PKVAKIRLNL…SIYLYDCTEV (65 aa). Lysine 947 bears the N6-acetyllysine mark. Position 963 is a phosphoserine (serine 963).

Belongs to the DEAD box helicase family. DEAH subfamily. Found in a multi-helicase-TICAM1 complex at least composed of DHX36, DDX1, DDX21 and TICAM1; this complex exists in resting cells with or without dsRNA poly(I:C) ligand stimulation. Interacts (via C-terminus) with TICAM1 (via TIR domain). Interacts (via C-terminus) with DDX21; this interaction serves as bridges to TICAM1. Interacts with TERT; this interaction is dependent on the ability of DHX36 to bind to the G-quadruplex RNA (G4-RNA) structure present in the telomerase RNA template component (TERC). Interacts with DKC1; this interaction is dependent on the ability of DHX36 to bind to the G4-RNA structure present in TERC. Interacts with PARN; this interaction stimulates PARN to enhance uPA mRNA decay. Interacts with EXOSC3; this interaction occurs in a RNase-insensitive manner. Interacts with EXOSC10; this interaction occurs in a RNase-insensitive manner. Interacts with ILF3; this interaction occurs in a RNA-dependent manner. Interacts with ELAVL1; this interaction occurs in an RNA-dependent manner. Interacts with DDX5; this interaction occurs in a RNA-dependent manner. Interacts with DDX17; this interaction occurs in a RNA-dependent manner. Interacts with HDAC1; this interaction occurs in a RNA-dependent manner. Interacts with HDAC3; this interaction occurs in a RNA-dependent manner. Interacts with HDAC4. Interacts with AGO1. Interacts with AGO2. Interacts with ERCC6. Requires Mg(2+) as cofactor. Highly expressed in testis.

It is found in the nucleus. The protein localises to the cytoplasm. Its subcellular location is the cytosol. It localises to the stress granule. The protein resides in the nucleus speckle. It is found in the chromosome. The protein localises to the telomere. Its subcellular location is the mitochondrion. It localises to the perikaryon. The protein resides in the cell projection. It is found in the dendrite. The protein localises to the axon. It catalyses the reaction ATP + H2O = ADP + phosphate + H(+). With respect to regulation, ATPase activity is enhanced in the presence of homomeric poly(U) RNAs, but not by double-stranded DNA (dsDNA), double-stranded RNA (dsRNA) and tRNA. Multifunctional ATP-dependent helicase that unwinds G-quadruplex (G4) structures. Plays a role in many biological processes such as genomic integrity, gene expression regulations and as a sensor to initiate antiviral responses. G4 structures correspond to helical structures containing guanine tetrads. Binds with high affinity to and unwinds G4 structures that are formed in nucleic acids (G4-DNA and G4-RNA). Plays a role in genomic integrity. Converts the G4-RNA structure present in telomerase RNA template component (TREC) into a double-stranded RNA to promote P1 helix formation that acts as a template boundary ensuring accurate reverse transcription. Plays a role in transcriptional regulation. Resolves G4-DNA structures in promoters of genes, such as YY1, KIT/c-kit and ALPL and positively regulates their expression. Plays a role in post-transcriptional regulation. Unwinds a G4-RNA structure located in the 3'-UTR polyadenylation site of the pre-mRNA TP53 and stimulates TP53 pre-mRNA 3'-end processing in response to ultraviolet (UV)-induced DNA damage. Binds to the precursor-microRNA-134 (pre-miR-134) terminal loop and regulates its transport into the synapto-dendritic compartment. Involved in the pre-miR-134-dependent inhibition of target gene expression and the control of dendritic spine size. Plays a role in the regulation of cytoplasmic mRNA translation and mRNA stability. Binds to both G4-RNA structures and alternative non-quadruplex-forming sequence within the 3'-UTR of the PITX1 mRNA regulating negatively PITX1 protein expression. Binds to both G4-RNA structure in the 5'-UTR and AU-rich elements (AREs) localized in the 3'-UTR of NKX2-5 mRNA to either stimulate protein translation or induce mRNA decay in an ELAVL1-dependent manner, respectively. Also binds to ARE sequences present in several mRNAs mediating exosome-mediated 3'-5' mRNA degradation. Involved in cytoplasmic urokinase-type plasminogen activator (uPA) mRNA decay. Component of a multi-helicase-TICAM1 complex that acts as a cytoplasmic sensor of viral double-stranded RNA (dsRNA) and plays a role in the activation of a cascade of antiviral responses including the induction of pro-inflammatory cytokines via the adapter molecule TICAM1. Required for early embryonic development and hematopoiesis. Involved in the regulation of cardioblast differentiation and proliferation during heart development. Involved in spermatogonia differentiation. May play a role in ossification. This Homo sapiens (Human) protein is ATP-dependent DNA/RNA helicase DHX36.